Consider the following 259-residue polypeptide: Ribonuclease HII (259 aa).

Residues 72–259 (SYIAGIDEVG…PIKDMIKNKL (188 aa)) form the RNase H type-2 domain. Residues aspartate 78, glutamate 79, and aspartate 170 each contribute to the a divalent metal cation site.

This sequence belongs to the RNase HII family. Mn(2+) is required as a cofactor. Requires Mg(2+) as cofactor.

It localises to the cytoplasm. It carries out the reaction Endonucleolytic cleavage to 5'-phosphomonoester.. In terms of biological role, endonuclease that specifically degrades the RNA of RNA-DNA hybrids. The protein is Ribonuclease HII of Bacillus cytotoxicus (strain DSM 22905 / CIP 110041 / 391-98 / NVH 391-98).